The primary structure comprises 167 residues: uncharacterized protein (167 aa).

An N-terminal signal peptide occupies residues methionine 1–alanine 23. The cysteines at positions 39 and 77 are disulfide-linked.

It belongs to the fimbrial protein family.

The protein resides in the fimbrium. This is an uncharacterized protein from Escherichia coli (strain K12).